The following is a 731-amino-acid chain: Polyribonucleotide nucleotidyltransferase (731 aa).

Mg(2+) is bound by residues aspartate 488 and aspartate 494. A KH domain is found at 555 to 614 (PRIEVINIAVDKIRDVIGSGGKVIREIVEQTGAKINIEDDGTIKIASADAKTIEAAKRWI). Residues 624-692 (GAIYQGTVVK…ERGKVRLSMK (69 aa)) form the S1 motif domain. Residues 693–731 (AVDQKTGKEMTDDKSVKEEKCMDEKKQPENKRRRKKKEE) are disordered. The segment covering 694-722 (VDQKTGKEMTDDKSVKEEKCMDEKKQPEN) has biased composition (basic and acidic residues).

This sequence belongs to the polyribonucleotide nucleotidyltransferase family. Mg(2+) serves as cofactor.

It is found in the cytoplasm. The enzyme catalyses RNA(n+1) + phosphate = RNA(n) + a ribonucleoside 5'-diphosphate. Its function is as follows. Involved in mRNA degradation. Catalyzes the phosphorolysis of single-stranded polyribonucleotides processively in the 3'- to 5'-direction. The protein is Polyribonucleotide nucleotidyltransferase of Bartonella tribocorum (strain CIP 105476 / IBS 506).